Reading from the N-terminus, the 326-residue chain is Probable fructokinase-4 (326 aa).

Belongs to the carbohydrate kinase PfkB family.

It carries out the reaction D-fructose + ATP = D-fructose 6-phosphate + ADP + H(+). It functions in the pathway glycan biosynthesis; starch biosynthesis. Its function is as follows. May play an important role in maintaining the flux of carbon towards starch formation. The polypeptide is Probable fructokinase-4 (Arabidopsis thaliana (Mouse-ear cress)).